Here is a 261-residue protein sequence, read N- to C-terminus: MFEARLIQGSILKKVLEALKDLINEACWDISSGGVNLQSMDSSHVSLVQLTLRSEGFDTYRCDRNLAMGVNLTSMSKILKCAGNEDIITLRAEDNADTLALVFEAPNQEKVSDYEMKLMDLDVEQLGIPEQEYSCVVKMPSGEFARICRDLSHIGDAVVISCAKDGVKFSASGELGNGNIKLSQTSNVDKEEEAVSIEMNEPVQLTFALRYLNFFTKATPLSPTVTLSMSADVPLVVEYKIADMGHLKYYLAPKIEDEEGS.

N6-acetyllysine is present on residues K14, K77, and K80. Residues 61–80 (RCDRNLAMGVNLTSMSKILK) mediate DNA binding. Cysteines 135 and 162 form a disulfide. Residue K164 forms a Glycyl lysine isopeptide (Lys-Gly) (interchain with G-Cter in SUMO2); alternate linkage. Residue K164 forms a Glycyl lysine isopeptide (Lys-Gly) (interchain with G-Cter in ubiquitin); alternate linkage. Position 211 is a phosphotyrosine; by EGFR (Y211). At K248 the chain carries N6-acetyllysine. K254 participates in a covalent cross-link: Glycyl lysine isopeptide (Lys-Gly) (interchain with G-Cter in SUMO2).

The protein belongs to the PCNA family. In terms of assembly, homotrimer. Interacts with p300/EP300; the interaction occurs on chromatin in UV-irradiated damaged cells. Interacts with CREBBP (via transactivation domain and C-terminus); the interaction occurs on chromatin in UV-irradiated damaged cells. Directly interacts with POLD1, POLD3 and POLD4 subunits of the DNA polymerase delta complex, POLD3 being the major interacting partner; the interaction with POLD3 is inhibited by CDKN1A/p21(CIP1). Forms a complex with activator 1 heteropentamer in the presence of ATP. Interacts with EXO1, POLH, POLK, DNMT1, ERCC5, FEN1, CDC6 and POLDIP2. Interacts with POLB. Interacts with APEX2; this interaction is triggered by reactive oxygen species and increased by misincorporation of uracil in nuclear DNA. Forms a ternary complex with DNTTIP2 and core histone. Interacts with KCTD10. Interacts with PPP1R15A. Interacts with SMARCA5/SNF2H. Interacts with BAZ1B/WSTF; the interaction is direct and is required for BAZ1B/WSTF binding to replication foci during S phase. Interacts with HLTF and SHPRH. Interacts with NUDT15. Interaction is disrupted in response to UV irradiation and acetylation. Interacts with CDKN1A/p21(CIP1) and CDT1; interacts via their PIP-box which also recruits the DCX(DTL) complex. The interaction with CDKN1A inhibits POLD3 binding. Interacts with DDX11. Interacts with EGFR; positively regulates PCNA. Interacts with PARPBP. Interacts (when ubiquitinated) with SPRTN; leading to enhance RAD18-mediated PCNA ubiquitination. Interacts (when polyubiquitinated) with ZRANB3. Interacts with SMARCAD1. Interacts with CDKN1C. Interacts with PCLAF (via PIP-box). Interacts with RTEL1 (via PIP-box); the interaction is direct and essential for the suppression of telomere fragility. Interacts with FAM111A (via PIP-box); the interaction is direct and required for PCNA loading on chromatin binding. Interacts with LIG1. Interacts with SETMAR. Interacts with ANKRD17. Interacts with FBXO18/FBH1 (via PIP-box); the interaction recruits the DCX(DTL) complex and promotes ubiquitination and degradation of FBXO18/FBH1. Interacts with POLN. Interacts with SDE2 (via PIP-box); the interaction is direct and prevents ultraviolet light induced monoubiquitination. Component of the replisome complex composed of at least DONSON, MCM2, MCM7, PCNA and TICRR; interaction at least with PCNA occurs during DNA replication. Interacts with MAPK15; the interaction is chromatin binding dependent and prevents MDM2-mediated PCNA destruction by inhibiting the association of PCNA with MDM2. Interacts with PARP10 (via PIP-box). Interacts with DDI2. Interacts with HMCES (via PIP-box). Interacts with TRAIP (via PIP-box). Interacts with UHRF2. Interacts with ALKBH2; this interaction is enhanced during the S-phase of the cell cycle. Interacts with ATAD5; the interaction promotes USP1-mediated PCNA deubiquitination. Interacts (when phosphorylated) with GRB2. Interacts with ANG. Interacts with nuclear UNG; this interaction mediates UNG recruitment to S-phase replication foci. Interacts with ERCC6L2 (via an atypical PIP-box); this interaction facilitates cenrtomeric localization of ERCC6L2. Post-translationally, phosphorylated. Phosphorylation at Tyr-211 by EGFR stabilizes chromatin-associated PCNA. In terms of processing, acetylated by CREBBP and p300/EP300; preferentially acetylated by CREBBP on Lys-80, Lys-13 and Lys-14 and on Lys-77 by p300/EP300 upon loading on chromatin in response to UV irradiation. Lysine acetylation disrupts association with chromatin, hence promoting PCNA ubiquitination and proteasomal degradation in response to UV damage in a CREBBP- and EP300-dependent manner. Acetylation disrupts interaction with NUDT15 and promotes degradation. Ubiquitinated. Following DNA damage, can be either monoubiquitinated to stimulate direct bypass of DNA lesions by specialized DNA polymerases or polyubiquitinated to promote recombination-dependent DNA synthesis across DNA lesions by template switching mechanisms. Following induction of replication stress, monoubiquitinated by the UBE2B-RAD18 complex on Lys-164, leading to recruit translesion (TLS) polymerases, which are able to synthesize across DNA lesions in a potentially error-prone manner. An error-free pathway also exists and requires non-canonical polyubiquitination on Lys-164 through 'Lys-63' linkage of ubiquitin moieties by the E2 complex UBE2N-UBE2V2 and the E3 ligases, HLTF, RNF8 and SHPRH. This error-free pathway, also known as template switching, employs recombination mechanisms to synthesize across the lesion, using as a template the undamaged, newly synthesized strand of the sister chromatid. Monoubiquitination at Lys-164 also takes place in undamaged proliferating cells, and is mediated by the DCX(DTL) complex, leading to enhance PCNA-dependent translesion DNA synthesis. Sumoylated during S phase. Post-translationally, methylated on glutamate residues by ARMT1.

The protein localises to the nucleus. In terms of biological role, auxiliary protein of DNA polymerase delta and epsilon, is involved in the control of eukaryotic DNA replication by increasing the polymerase's processibility during elongation of the leading strand. Induces a robust stimulatory effect on the 3'-5' exonuclease and 3'-phosphodiesterase, but not apurinic-apyrimidinic (AP) endonuclease, APEX2 activities. Has to be loaded onto DNA in order to be able to stimulate APEX2. Plays a key role in DNA damage response (DDR) by being conveniently positioned at the replication fork to coordinate DNA replication with DNA repair and DNA damage tolerance pathways. Acts as a loading platform to recruit DDR proteins that allow completion of DNA replication after DNA damage and promote postreplication repair: Monoubiquitinated PCNA leads to recruitment of translesion (TLS) polymerases, while 'Lys-63'-linked polyubiquitination of PCNA is involved in error-free pathway and employs recombination mechanisms to synthesize across the lesion. The protein is Proliferating cell nuclear antigen (Pcna) of Rattus norvegicus (Rat).